We begin with the raw amino-acid sequence, 376 residues long: Chaperone protein DnaJ 2 (376 aa).

One can recognise a J domain in the interval 8-72; it reads DYYEILGVPR…EKRKLYDMYG (65 aa). The CR-type zinc finger occupies 143–219; it reads GTTVPIEVER…CTGRGYGLVK (77 aa). Zn(2+)-binding residues include Cys-156, Cys-159, Cys-172, Cys-175, Cys-194, Cys-197, Cys-207, and Cys-210. 4 CXXCXGXG motif repeats span residues 156 to 163, 172 to 179, 194 to 201, and 207 to 214; these read CSACGGTG, CPTCGGRG, CPTCGGEG, and CHACTGRG.

The protein belongs to the DnaJ family. As to quaternary structure, homodimer. Requires Zn(2+) as cofactor.

Its subcellular location is the cytoplasm. Participates actively in the response to hyperosmotic and heat shock by preventing the aggregation of stress-denatured proteins and by disaggregating proteins, also in an autonomous, DnaK-independent fashion. Unfolded proteins bind initially to DnaJ; upon interaction with the DnaJ-bound protein, DnaK hydrolyzes its bound ATP, resulting in the formation of a stable complex. GrpE releases ADP from DnaK; ATP binding to DnaK triggers the release of the substrate protein, thus completing the reaction cycle. Several rounds of ATP-dependent interactions between DnaJ, DnaK and GrpE are required for fully efficient folding. Also involved, together with DnaK and GrpE, in the DNA replication of plasmids through activation of initiation proteins. This chain is Chaperone protein DnaJ 2, found in Aquifex aeolicus (strain VF5).